The sequence spans 148 residues: Large ribosomal subunit protein uL15 (148 aa).

The interval 1 to 51 (MNLSSLKPAEGAVKSRKRIGRGPGSGLGGTSTRGHKGAKSRSGYSKKIGFE) is disordered. Positions 21–31 (RGPGSGLGGTS) are enriched in gly residues.

It belongs to the universal ribosomal protein uL15 family. Part of the 50S ribosomal subunit.

Its function is as follows. Binds to the 23S rRNA. The polypeptide is Large ribosomal subunit protein uL15 (Porphyromonas gingivalis (strain ATCC 33277 / DSM 20709 / CIP 103683 / JCM 12257 / NCTC 11834 / 2561)).